Reading from the N-terminus, the 111-residue chain is RNA polymerase-binding protein RbpA (111 aa).

It belongs to the RNA polymerase-binding protein RbpA family. Forms a complex with the RNAP catalytic core and with free principal sigma factors.

Functionally, binds to RNA polymerase (RNAP), stimulating transcription from principal, but not alternative sigma factor promoters. The polypeptide is RNA polymerase-binding protein RbpA (Mycobacterium tuberculosis (strain CDC 1551 / Oshkosh)).